We begin with the raw amino-acid sequence, 990 residues long: Presequence protease, mitochondrial (990 aa).

Residues 1-56 (MLRFQRTVPRVAIRRLANVYSEGAVLHGYKVRRAQEIPEMRMAAVELEHEMTGARH) constitute a mitochondrion transit peptide. Residue His84 participates in Zn(2+) binding. Glu87 functions as the Proton acceptor in the catalytic mechanism. His88 is a binding site for Zn(2+). Glu160 is a catalytic residue. A Zn(2+)-binding site is contributed by Glu185.

This sequence belongs to the peptidase M16 family. PreP subfamily. In terms of assembly, monomer and homodimer; homodimerization is induced by binding of the substrate. Requires Zn(2+) as cofactor.

It localises to the mitochondrion intermembrane space. It is found in the mitochondrion matrix. Functionally, degrades mitochondrial transit peptides after their cleavage in the intermembrane space or in the matrix, and presequence peptides; clearance of these peptides is required to keep the presequence processing machinery running. Preferentially cleaves the N-terminal side of paired basic amino acid residues. Also degrades other unstructured peptides. May function as an ATP-dependent peptidase as opposed to a metalloendopeptidase. The sequence is that of Presequence protease, mitochondrial (CYM1) from Eremothecium gossypii (strain ATCC 10895 / CBS 109.51 / FGSC 9923 / NRRL Y-1056) (Yeast).